Consider the following 378-residue polypeptide: Spermidine/putrescine import ATP-binding protein PotA (378 aa).

Residues V18–I248 enclose the ABC transporter domain. An ATP-binding site is contributed by G50–T57.

This sequence belongs to the ABC transporter superfamily. Spermidine/putrescine importer (TC 3.A.1.11.1) family. The complex is composed of two ATP-binding proteins (PotA), two transmembrane proteins (PotB and PotC) and a solute-binding protein (PotD).

The protein localises to the cell inner membrane. It catalyses the reaction ATP + H2O + polyamine-[polyamine-binding protein]Side 1 = ADP + phosphate + polyamineSide 2 + [polyamine-binding protein]Side 1.. Functionally, part of the ABC transporter complex PotABCD involved in spermidine/putrescine import. Responsible for energy coupling to the transport system. The sequence is that of Spermidine/putrescine import ATP-binding protein PotA from Salmonella paratyphi A (strain ATCC 9150 / SARB42).